The primary structure comprises 395 residues: Putative pyridoxal phosphate-dependent acyltransferase (395 aa).

Residue Gly-110–Phe-111 participates in pyridoxal 5'-phosphate binding. His-135 is a binding site for substrate. Pyridoxal 5'-phosphate-binding positions include Ser-185, Asp-210–His-213, and Thr-240–Lys-243. An N6-(pyridoxal phosphate)lysine modification is found at Lys-243. Thr-357 provides a ligand contact to substrate.

Belongs to the class-II pyridoxal-phosphate-dependent aminotransferase family. Homodimer. Pyridoxal 5'-phosphate is required as a cofactor.

In Staphylococcus aureus (strain MRSA252), this protein is Putative pyridoxal phosphate-dependent acyltransferase.